Here is a 1142-residue protein sequence, read N- to C-terminus: ABC transporter F family member 4 (1142 aa).

Positions 1–564 (MGPKGKKKGQ…EDAFELAKKK (564 aa)) are disordered. Composition is skewed to low complexity over residues 121–143 (PQPV…QQQQ), 153–166 (PQPV…APQK), and 182–195 (PQPV…APQK). 2 stretches are compositionally biased toward acidic residues: residues 203–212 (SEDEDEEDEV) and 233–244 (EEEEEEEEEEIE). Basic residues-rich tracts occupy residues 249–261 (KGGK…KGGK) and 280–290 (KGGKKDKKKGS). The segment covering 295–306 (EEEEEEEEEEIE) has biased composition (acidic residues). Basic and acidic residues predominate over residues 314 to 328 (NKKDQKKGGKGKHVE). The segment covering 329–340 (EEEEEEEEEEIE) has biased composition (acidic residues). The span at 377–387 (KGGKKDKKKGS) shows a compositional bias: basic residues. Acidic residues-rich tracts occupy residues 392-404 (EEEE…EEIE) and 441-451 (EEEEQEQEEEE). Positions 456–467 (SKSNKKDKKKGK) are enriched in basic residues. Residues 471–480 (EEEEEEEEEE) show a composition bias toward acidic residues. A compositionally biased stretch (basic residues) spans 485 to 496 (SKSNKKDKKKGS). Over residues 501 to 518 (EEEEEEEEEEEEEKEEEE) the composition is skewed to acidic residues. The span at 530–548 (AKKVKKVDKKEKKKEKEKK) shows a compositional bias: basic residues. 2 consecutive ABC transporter domains span residues 604 to 857 (IKFD…RSKE) and 923 to 1139 (LVFK…DNMV). ATP is bound by residues 636 to 643 (GRNGIGKS) and 956 to 963 (GMNGVGKS).

This sequence belongs to the ABC transporter superfamily.

This Dictyostelium discoideum (Social amoeba) protein is ABC transporter F family member 4 (abcF4).